A 1224-amino-acid chain; its full sequence is Cytosolic carboxypeptidase 1 (1224 aa).

The tract at residues 361–398 (PPDVDDVVDESDDNDDAETESEIETEDDKDQNFKNDDI) is disordered. Acidic residues predominate over residues 363-389 (DVDDVVDESDDNDDAETESEIETEDDK). The region spanning 846–1136 (YPYTYSTLKM…KFCVGLLRLK (291 aa)) is the Peptidase M14 domain. Positions 918, 921, and 1015 each coordinate Zn(2+). Catalysis depends on E1100, which acts as the Proton donor/acceptor. Acidic residues predominate over residues 1186-1197 (SAESNDDQDAEL). The tract at residues 1186-1224 (SAESNDDQDAELADNVGDYEANNQEDGLSDSDSTRILLS) is disordered. Over residues 1206 to 1224 (ANNQEDGLSDSDSTRILLS) the composition is skewed to polar residues.

The protein belongs to the peptidase M14 family. Zn(2+) serves as cofactor.

The protein localises to the cytoplasm. Its subcellular location is the cytosol. The protein resides in the nucleus. It localises to the mitochondrion. It carries out the reaction (L-glutamyl)(n+1)-gamma-L-glutamyl-L-glutamyl-[protein] + H2O = (L-glutamyl)(n)-gamma-L-glutamyl-L-glutamyl-[protein] + L-glutamate. The enzyme catalyses C-terminal L-alpha-aminoacyl-L-glutamyl-L-glutamyl-[tubulin] + H2O = C-terminal L-alpha-aminoacyl-L-glutamyl-[tubulin] + L-glutamate. In terms of biological role, metallocarboxypeptidase that mediates protein deglutamylation of tubulin and non-tubulin target proteins. Catalyzes the removal of polyglutamate side chains present on the gamma-carboxyl group of glutamate residues within the C-terminal tail of alpha- and beta-tubulin. Specifically cleaves tubulin long-side-chains, while it is not able to remove the branching point glutamate. Also catalyzes the removal of polyglutamate residues from the carboxy-terminus of alpha-tubulin as well as non-tubulin proteins. This is Cytosolic carboxypeptidase 1 (AGTPBP1) from Gallus gallus (Chicken).